Consider the following 381-residue polypeptide: Selenoprotein P (381 aa).

The first 19 residues, 1 to 19, serve as a signal peptide directing secretion; that stretch reads MWRSLGLALALCLLPSGGT. A glycan (N-linked (GlcNAc...) asparagine) is linked at asparagine 46. Position 59 (selenocysteine 59) is a non-standard amino acid, selenocysteine. N-linked (GlcNAc...) (complex) asparagine glycosylation occurs at asparagine 83. N-linked (GlcNAc...) asparagine glycosylation is found at asparagine 119, asparagine 128, and asparagine 174. The segment at 200–268 is disordered; the sequence is TPSPHYHHEH…ENRDMPASED (69 aa). The segment covering 204-216 has biased composition (basic residues); the sequence is HYHHEHHHNHGHQ. Over residues 218–230 the composition is skewed to polar residues; the sequence is LGSSELSENQQPG. The segment covering 243–255 has biased composition (basic residues); that stretch reads LHHHHKHKGQHRQ. Phosphoserine is present on serine 266. Non-standard amino acids (selenocysteine) are located at selenocysteine 300, selenocysteine 318, and selenocysteine 330. Residue asparagine 338 is glycosylated (N-linked (GlcNAc...) asparagine). Non-standard amino acids (selenocysteine) are located at selenocysteine 345, selenocysteine 352, selenocysteine 367, selenocysteine 369, selenocysteine 376, and selenocysteine 378. The disordered stretch occupies residues 355–381; it reads SQQLIPTEASASURUKNQAKKUEUPSN.

This sequence belongs to the selenoprotein P family. Phosphorylation sites are present in the extracellular medium. In terms of tissue distribution, made in the liver and heart and secreted into the plasma. It is also found in the kidney.

It localises to the secreted. Functionally, might be responsible for some of the extracellular antioxidant defense properties of selenium or might be involved in the transport of selenium. May supply selenium to tissues such as brain and testis. The sequence is that of Selenoprotein P from Homo sapiens (Human).